Here is an 896-residue protein sequence, read N- to C-terminus: MDGAAGPGDGPAREALQSLSQRLRVQEQEMELVKAALAEALRLLRLQVPPSSLQGSGTPAPPGDSLAAPPGLPPTCTPSLVSRGTQTETEVELKSSPGPPGLSNGPPAPQGASEEPSGTQSEGGGSSSSGAGSPGPPGILRPLQPPQRADTPRRNSSSSSSPSERPRQKLSRKAISSANLLVRSGSTESRGGKDPLSSPGGPGSRRSNYNLEGISVKMFLRGRPITMYIPSGIRSLEELPSGPPPETLSLDWVYGYRGRDSRSNLFVLRSGEVVYFIACVVVLYRPGGGPGGPGGGGQRHYRGHTDCVRCLAVHPDGVRVASGQTAGVDKDGKPLQPVVHIWDSETLLKLQEIGLGAFERGVGALAFSAADQGAFLCVVDDSNEHMLSVWDCSRGMKLAEIKSTNDSVLAVGFNPRDSSCIVTSGKSHVHFWNWSGGVGVPGNGTLTRKQGVFGKYKKPKFIPCFVFLPDGDILTGDSEGNILTWGRSPSDSKTPGRGGAKETYGIVAQAHAHEGSIFALCLRRDGTVLSGGGRDRRLVQWGPGLVALQEAEIPEHFGAVRAIAEGLGSELLVGTTKNALLRGDLAQGFSPVIQGHTDELWGLCTHPSQNRFLTCGHDRQLCLWDGESHALAWSIDLKETGLCADFHPSGAVVAVGLNTGRWLVLDTETREIVSDVIDGNEQLSVVRYSPDGLYLAIGSHDNVIYIYSVSSDGAKSSRFGRCMGHSSFITHLDWSKDGNFIMSNSGDYEILYWDVAGGCKQLKNRYESRDREWATYTCVLGFHVYGVWPDGSDGTDINSLCRSHNERVVAVADDFCKVHLFQYPCARAKAPSRMYGGHGSHVTSVRFTHDDSHLVSLGGKDASIFQWRVLGAGGAGPAPATPSRTPSLSPASSLDV.

N-acetylmethionine is present on methionine 1. A coiled-coil region spans residues 16 to 43 (LQSLSQRLRVQEQEMELVKAALAEALRL). The interval 50–209 (PSSLQGSGTP…GGPGSRRSNY (160 aa)) is disordered. Polar residues predominate over residues 77 to 88 (TPSLVSRGTQTE). The span at 134–145 (PGPPGILRPLQP) shows a compositional bias: pro residues. The segment covering 154-163 (RNSSSSSSPS) has biased composition (low complexity). Residues 174-189 (AISSANLLVRSGSTES) are compositionally biased toward polar residues. Phosphoserine is present on residues serine 176, serine 198, and serine 204. WD repeat units follow at residues 234 to 286 (RSLE…LYRP), 295 to 344 (GGGQ…IWDS), 350 to 392 (LQEI…VWDC), 398 to 434 (LAEIKSTNDSVLAVGFNPRDSSCIVTSGKSHVHFWNW), 448 to 487 (RKQGVFGKYKKPKFIPCFVFLPDGDILTGDSEGNILTWGR), 504 to 543 (YGIVAQAHAHEGSIFALCLRRDGTVLSGGGRDRRLVQWGP), 549 to 584 (QEAEIPEHFGAVRAIAEGLGSELLVGTTKNALLRGD), 589 to 626 (FSPVIQGHTDELWGLCTHPSQNRFLTCGHDRQLCLWDG), 629 to 667 (HALAWSIDLKETGLCADFHPSGAVVAVGLNTGRWLVLDT), 674 to 709 (SDVIDGNEQLSVVRYSPDGLYLAIGSHDNVIYIYSV), 716 to 755 (SSRFGRCMGHSSFITHLDWSKDGNFIMSNSGDYEILYWDV), 765 to 823 (RYES…LFQY), and 830 to 869 (APSRMYGGHGSHVTSVRFTHDDSHLVSLGGKDASIFQWRV). The tract at residues 876-896 (GPAPATPSRTPSLSPASSLDV) is disordered. The segment covering 877–896 (PAPATPSRTPSLSPASSLDV) has biased composition (low complexity). Threonine 881 is modified (phosphothreonine; by CDK1). Serine 883 carries the post-translational modification Phosphoserine.

The protein belongs to the WD repeat EMAP family. As to quaternary structure, homotrimer; self-association is mediated by the N-terminal coiled coil. Interacts with EML2 but not with EML1. Interacts (phosphorylated at Thr-881) with TUBG1, HAUS1, HAUS2, HAUS3, HAUS4, HAUS5, HAUS6, HAUS7 and HAUS8. Phosphorylation at Thr-881 during mitosis is required for interaction with TUBG1, HAUS1, HAUS2, HAUS3, HAUS4, HAUS5, HAUS6, HAUS7 and HAUS8 and their recruitment to spindle microtubules.

It is found in the cytoplasm. The protein localises to the cytoskeleton. It localises to the nucleus. Its subcellular location is the midbody. The protein resides in the spindle. Its function is as follows. Regulates mitotic spindle assembly, microtubule (MT)-kinetochore attachment and chromosome separation via recruitment of HAUS augmin-like complex and TUBG1 to the existing MTs and promoting MT-based MT nucleation. Required for proper alignnment of chromosomes during metaphase. The polypeptide is Echinoderm microtubule-associated protein-like 3 (EML3) (Homo sapiens (Human)).